The sequence spans 616 residues: Chaperone protein DnaK (616 aa).

Thr175 carries the phosphothreonine; by autocatalysis modification. A disordered region spans residues 579 to 616 (GGDPSQAGGFDPNAAGGAQQEPHDDNVVDADFKVDDDK). The segment covering 599 to 616 (EPHDDNVVDADFKVDDDK) has biased composition (basic and acidic residues).

It belongs to the heat shock protein 70 family.

Functionally, acts as a chaperone. In Clostridium botulinum (strain Eklund 17B / Type B), this protein is Chaperone protein DnaK.